The following is a 119-amino-acid chain: Large ribosomal subunit protein uL18 (119 aa).

The disordered stretch occupies residues 1–23; that stretch reads MSQVDKAARRQKIKDRSRVSVQG.

This sequence belongs to the universal ribosomal protein uL18 family. Part of the 50S ribosomal subunit; part of the 5S rRNA/L5/L18/L25 subcomplex. Contacts the 5S and 23S rRNAs.

This is one of the proteins that bind and probably mediate the attachment of the 5S RNA into the large ribosomal subunit, where it forms part of the central protuberance. The protein is Large ribosomal subunit protein uL18 of Chlorobium chlorochromatii (strain CaD3).